Consider the following 489-residue polypeptide: Cytochrome P450-DIT2 (489 aa).

Cys435 provides a ligand contact to heme.

Belongs to the cytochrome P450 family. The cofactor is heme.

Involved in spore wall maturation. Thought to catalyze the oxidation of tyrosine residues in the formation of LL-dityrosine a precursor of the spore wall. The chain is Cytochrome P450-DIT2 (DIT2) from Saccharomyces cerevisiae (strain ATCC 204508 / S288c) (Baker's yeast).